A 176-amino-acid chain; its full sequence is UPF0098 protein Rv2140c (176 aa).

Thr-2 is modified (N-acetylthreonine).

The protein belongs to the UPF0098 family.

This chain is UPF0098 protein Rv2140c, found in Mycobacterium tuberculosis (strain ATCC 25618 / H37Rv).